Here is a 345-residue protein sequence, read N- to C-terminus: MRVLGIESSCDETGVAIYDTEQGLLGQALYSQVEMHARYGGVVPELASRDHVQRVLPLIREVMTEANTQPQQLDGVAFTAGPGLAGALLVGAGVARSLAFGWNLPAVAVHHMEGHLLAPLLEPNAPAFPFVALLVSGGHTLLLDAKALGEYEILGESVDDAAGEAFDKAAKMMGLGYPGGPRVATLAQQGTAGRFRFPRPMTDRPGLDMSFSGLKTFTLNTINDLGGKEALSEQDRADIARAFEEAAVDTLVIKCRRAVEQTGHKRLVMAGGVSANQSLRAKLAEQMKKRGVDVYYPAPQYCTDNGAMIAFAGALRLQAGERAELPIKIRPRWPLTELAKLQGAD.

Fe cation is bound by residues histidine 111 and histidine 115. Residues leucine 134–glycine 138, aspartate 167, glycine 180, and asparagine 276 each bind substrate. Aspartate 304 contributes to the Fe cation binding site.

The protein belongs to the KAE1 / TsaD family. Fe(2+) is required as a cofactor.

It is found in the cytoplasm. The catalysed reaction is L-threonylcarbamoyladenylate + adenosine(37) in tRNA = N(6)-L-threonylcarbamoyladenosine(37) in tRNA + AMP + H(+). Required for the formation of a threonylcarbamoyl group on adenosine at position 37 (t(6)A37) in tRNAs that read codons beginning with adenine. Is involved in the transfer of the threonylcarbamoyl moiety of threonylcarbamoyl-AMP (TC-AMP) to the N6 group of A37, together with TsaE and TsaB. TsaD likely plays a direct catalytic role in this reaction. This chain is tRNA N6-adenosine threonylcarbamoyltransferase, found in Alcanivorax borkumensis (strain ATCC 700651 / DSM 11573 / NCIMB 13689 / SK2).